The following is a 150-amino-acid chain: 3-dehydroquinate dehydratase (150 aa).

Residue Tyr-26 is the Proton acceptor of the active site. Substrate-binding residues include Asn-77, His-83, and Asp-90. His-103 serves as the catalytic Proton donor. Residues 104-105 (LS) and Arg-114 each bind substrate.

The protein belongs to the type-II 3-dehydroquinase family. Homododecamer.

The catalysed reaction is 3-dehydroquinate = 3-dehydroshikimate + H2O. It participates in metabolic intermediate biosynthesis; chorismate biosynthesis; chorismate from D-erythrose 4-phosphate and phosphoenolpyruvate: step 3/7. Functionally, catalyzes a trans-dehydration via an enolate intermediate. This is 3-dehydroquinate dehydratase from Photorhabdus laumondii subsp. laumondii (strain DSM 15139 / CIP 105565 / TT01) (Photorhabdus luminescens subsp. laumondii).